The following is a 287-amino-acid chain: ATP synthase gamma chain (287 aa).

It belongs to the ATPase gamma chain family. As to quaternary structure, F-type ATPases have 2 components, CF(1) - the catalytic core - and CF(0) - the membrane proton channel. CF(1) has five subunits: alpha(3), beta(3), gamma(1), delta(1), epsilon(1). CF(0) has three main subunits: a, b and c.

Its subcellular location is the cell inner membrane. Produces ATP from ADP in the presence of a proton gradient across the membrane. The gamma chain is believed to be important in regulating ATPase activity and the flow of protons through the CF(0) complex. This is ATP synthase gamma chain from Colwellia psychrerythraea (strain 34H / ATCC BAA-681) (Vibrio psychroerythus).